A 216-amino-acid polypeptide reads, in one-letter code: MIVIGEKFPEVEVKTTHGVIKLPDHFTKQGKWFMLFSHPADFTPVCTTEFYGLQIRLEKFRELGVEPIGLSVDQVFSHLKWMEWIKEKLGVEIEFPVIADDRGDLAEKLGMIPSGSTITARAVFIVDDKGIIRAIVYYPAEVGRDWDEILRLVKALKISTEKGVALPHKWPNNELIGDKVIVPPASSVEQIKEREEAKAKGEIECYDWWFCYKKLE.

The Thioredoxin domain maps to 2–158 (IVIGEKFPEV…ILRLVKALKI (157 aa)). The active-site Cysteine sulfenic acid (-SOH) intermediate is the Cys-46. Arg-121 is a substrate binding site. A disulfide bridge links Cys-205 with Cys-211.

Belongs to the peroxiredoxin family. Prx6 subfamily. Homodecamer. Pentamer of dimers that assemble into a ring structure.

It is found in the cytoplasm. It catalyses the reaction a hydroperoxide + [thioredoxin]-dithiol = an alcohol + [thioredoxin]-disulfide + H2O. In terms of biological role, thiol-specific peroxidase that catalyzes the reduction of hydrogen peroxide and organic hydroperoxides to water and alcohols, respectively. Plays a role in cell protection against oxidative stress by detoxifying peroxides. The chain is Peroxiredoxin from Pyrococcus furiosus (strain ATCC 43587 / DSM 3638 / JCM 8422 / Vc1).